Reading from the N-terminus, the 159-residue chain is Ribosomal RNA large subunit methyltransferase H (159 aa).

Residues Leu-76, Gly-108, and 127 to 132 contribute to the S-adenosyl-L-methionine site; that span reads FSKMTF.

It belongs to the RNA methyltransferase RlmH family. In terms of assembly, homodimer.

The protein localises to the cytoplasm. It catalyses the reaction pseudouridine(1915) in 23S rRNA + S-adenosyl-L-methionine = N(3)-methylpseudouridine(1915) in 23S rRNA + S-adenosyl-L-homocysteine + H(+). Functionally, specifically methylates the pseudouridine at position 1915 (m3Psi1915) in 23S rRNA. The sequence is that of Ribosomal RNA large subunit methyltransferase H from Lachnospira eligens (strain ATCC 27750 / DSM 3376 / VPI C15-48 / C15-B4) (Eubacterium eligens).